A 293-amino-acid chain; its full sequence is Proximal tail tube connector protein (293 aa).

The interval 104–240 is disordered; sequence TRLNTTGNKK…NANTTTNDKL (137 aa). 3 stretches are compositionally biased toward basic and acidic residues: residues 112–123, 130–140, and 162–173; these read KKNDTERNDNRD, ADGKSNTKTSD, and NFNRKIDSDQPD. The span at 174–184 shows a compositional bias: polar residues; it reads SRLNLTTNDGQ. A compositionally biased stretch (low complexity) spans 196–238; the sequence is NNTNNKRNTTGTNNVTSSAESESTGSGTSDTVTTDNANTTTND.

Belongs to the phi29likevirus proximal tail tube connector protein family.

The protein resides in the virion. Its function is as follows. Forms the proximal part of the tail tube. The protein is Proximal tail tube connector protein (11) of Bacillus subtilis (Bacteriophage B103).